Reading from the N-terminus, the 174-residue chain is Ferredoxin-2, mitochondrial (174 aa).

The N-terminal 43 residues, 1 to 43 (MAASMARGVSARVLLRAAGGSWGPRAGHAAVTSRTFGTTGERR), are a transit peptide targeting the mitochondrion. The segment at 26 to 52 (AGHAAVTSRTFGTTGERRAGEEAADSP) is disordered. The 103-residue stretch at 59-161 (VNVVFVDRSG…GVEFALPKIT (103 aa)) folds into the 2Fe-2S ferredoxin-type domain. Positions 96, 102, 105, and 142 each coordinate [2Fe-2S] cluster.

This sequence belongs to the adrenodoxin/putidaredoxin family. As to quaternary structure, component of the mitochondrial core iron-sulfur cluster (ISC) complex composed of NFS1, LYRM4, NDUFAB1, ISCU, FXN, and FDX2; this complex is a heterohexamer containing two copies of each monomer. Form a heterodimer complex with NFS1. Interacts (in both their reduced and oxidized states) with the cysteine desulfurase (NFS1:LYRM4) complex; this interaction stimulates cysteine desulfurase activity, and serves as a reductant for Fe-S cluster assembly. Requires [2Fe-2S] cluster as cofactor.

It localises to the mitochondrion. It is found in the mitochondrion matrix. In terms of biological role, electron donor, of the core iron-sulfur cluster (ISC) assembly complex, that acts to reduce the persulfide into sulfide during [2Fe-2S] clusters assembly on the scaffolding protein ISCU. The core iron-sulfur cluster (ISC) assembly complex is involved in the de novo synthesis of a [2Fe-2S] cluster, the first step of the mitochondrial iron-sulfur protein biogenesis. This process is initiated by the cysteine desulfurase complex (NFS1:LYRM4:NDUFAB1) that produces persulfide which is delivered on the scaffold protein ISCU in a FXN-dependent manner. Then this complex is stabilized by FDX2 which provides reducing equivalents to accomplish the [2Fe-2S] cluster assembly. Finally, the [2Fe-2S] cluster is transferred from ISCU to chaperone proteins, including HSCB, HSPA9 and GLRX5. Essential for coenzyme Q biosynthesis: together with FDXR, transfers the electrons required for the hydroxylation reaction performed by COQ6. This chain is Ferredoxin-2, mitochondrial, found in Mus musculus (Mouse).